The primary structure comprises 456 residues: Serine--tRNA ligase (456 aa).

Disordered regions lie at residues 107 to 130 (PHSSVPEGRSESDNREVRRWGTPP) and 229 to 253 (FLENQPVAATLPSNSNSPQGGQDDD). Positions 114–125 (GRSESDNREVRR) are enriched in basic and acidic residues. Residues 239-248 (LPSNSNSPQG) show a composition bias toward polar residues. L-serine is bound at residue 260 to 262 (TSE). 291 to 293 (RSE) lines the ATP pocket. Residue Glu314 participates in L-serine binding. 378-381 (EISS) is an ATP binding site. Ser413 contacts L-serine.

Belongs to the class-II aminoacyl-tRNA synthetase family. Type-1 seryl-tRNA synthetase subfamily. As to quaternary structure, homodimer. The tRNA molecule binds across the dimer.

It localises to the cytoplasm. The enzyme catalyses tRNA(Ser) + L-serine + ATP = L-seryl-tRNA(Ser) + AMP + diphosphate + H(+). It catalyses the reaction tRNA(Sec) + L-serine + ATP = L-seryl-tRNA(Sec) + AMP + diphosphate + H(+). Its pathway is aminoacyl-tRNA biosynthesis; selenocysteinyl-tRNA(Sec) biosynthesis; L-seryl-tRNA(Sec) from L-serine and tRNA(Sec): step 1/1. Functionally, catalyzes the attachment of serine to tRNA(Ser). Is also able to aminoacylate tRNA(Sec) with serine, to form the misacylated tRNA L-seryl-tRNA(Sec), which will be further converted into selenocysteinyl-tRNA(Sec). This is Serine--tRNA ligase from Nitrosospira multiformis (strain ATCC 25196 / NCIMB 11849 / C 71).